The chain runs to 463 residues: Ribulose bisphosphate carboxylase large chain (463 aa).

Lys5 is modified (N6,N6,N6-trimethyllysine). The substrate site is built by Asn114 and Thr164. Residue Lys166 is the Proton acceptor of the active site. Position 168 (Lys168) interacts with substrate. Mg(2+)-binding residues include Lys192, Asp194, and Glu195. At Lys192 the chain carries N6-carboxylysine. His285 (proton acceptor) is an active-site residue. Arg286, His318, and Ser370 together coordinate substrate.

It belongs to the RuBisCO large chain family. Type I subfamily. As to quaternary structure, heterohexadecamer of 8 large chains and 8 small chains; disulfide-linked. The disulfide link is formed within the large subunit homodimers. Mg(2+) is required as a cofactor. In terms of processing, the disulfide bond which can form in the large chain dimeric partners within the hexadecamer appears to be associated with oxidative stress and protein turnover.

It is found in the plastid. It localises to the chloroplast. The enzyme catalyses 2 (2R)-3-phosphoglycerate + 2 H(+) = D-ribulose 1,5-bisphosphate + CO2 + H2O. It catalyses the reaction D-ribulose 1,5-bisphosphate + O2 = 2-phosphoglycolate + (2R)-3-phosphoglycerate + 2 H(+). Functionally, ruBisCO catalyzes two reactions: the carboxylation of D-ribulose 1,5-bisphosphate, the primary event in carbon dioxide fixation, as well as the oxidative fragmentation of the pentose substrate in the photorespiration process. Both reactions occur simultaneously and in competition at the same active site. This is Ribulose bisphosphate carboxylase large chain from Pelargonium grandiflorum (Geranium).